The primary structure comprises 116 residues: Proline-rich protein 9 (116 aa).

The polypeptide is Proline-rich protein 9 (PRR9) (Bos taurus (Bovine)).